The sequence spans 592 residues: Prospero homeobox protein 2 (592 aa).

5 disordered regions span residues 20-56 (EACTEGERSSSPPELDRDSPFPWSQVPSSSPTDPEWF), 85-129 (GNAQ…RKGG), 155-218 (KPRD…LPSG), 308-336 (RLDSPRYPIPPRMTPKPCQDPPANFPLTA), and 353-382 (RYNNGHWSSSPPQDSSSQRHPSSEPALRPW). Residues 95 to 106 (CPKKARERKRKQ) are compositionally biased toward basic residues. Basic and acidic residues predominate over residues 201 to 211 (SGAEKHQESEK). The span at 314–331 (YPIPPRMTPKPCQDPPAN) shows a compositional bias: pro residues. The span at 360 to 377 (SSSPPQDSSSQRHPSSEP) shows a compositional bias: low complexity. Residues 437–495 (QEGLNPGHLKKAKLMFFFTRYPSSNLLKVYFPDVQFNRCITSQMIKWFSNFREFYYIQM) enclose the Prospero-type homeo domain. Residues 437-592 (QEGLNPGHLK…EIFKSSSYPQ (156 aa)) are homeo-Prospero. Residues 496–592 (EKSARQAISD…EIFKSSSYPQ (97 aa)) enclose the Prospero domain.

This sequence belongs to the Prospero homeodomain family.

It is found in the nucleus. Its function is as follows. Transcription regulator. Does not seem to be essential for embryonic development and postnatal survival. This chain is Prospero homeobox protein 2 (PROX2), found in Homo sapiens (Human).